We begin with the raw amino-acid sequence, 253 residues long: MLAKRIIACLDVKDGRVVKGTNFENLRDSGDPVELGKFYSEIGIDELVFLDITASVEKRKTMLELVEKVAEQIDIPFTVGGGIHDFETASELILRGADKVSINTAAVGNPSLITQIAQTFGSQAVVVAIDAKRVDGEFMVFTYSGKKNTGILLRDWVVEVERRGAGEILLTSIDRDGTKSGYDTEMIRFVRPLTTLPIIASGGAGKMEHFLEAFLAGADAALAASVFHFREIDVRELKEYLKKHGVNVRLEGL.

Residues Asp-11 and Asp-130 contribute to the active site.

It belongs to the HisA/HisF family. As to quaternary structure, heterodimer of HisH and HisF.

It localises to the cytoplasm. It catalyses the reaction 5-[(5-phospho-1-deoxy-D-ribulos-1-ylimino)methylamino]-1-(5-phospho-beta-D-ribosyl)imidazole-4-carboxamide + L-glutamine = D-erythro-1-(imidazol-4-yl)glycerol 3-phosphate + 5-amino-1-(5-phospho-beta-D-ribosyl)imidazole-4-carboxamide + L-glutamate + H(+). It functions in the pathway amino-acid biosynthesis; L-histidine biosynthesis; L-histidine from 5-phospho-alpha-D-ribose 1-diphosphate: step 5/9. IGPS catalyzes the conversion of PRFAR and glutamine to IGP, AICAR and glutamate. The HisF subunit catalyzes the cyclization activity that produces IGP and AICAR from PRFAR using the ammonia provided by the HisH subunit. The sequence is that of Imidazole glycerol phosphate synthase subunit HisF from Thermotoga sp. (strain RQ2).